The following is a 512-amino-acid chain: Probable malate:quinone oxidoreductase (512 aa).

The protein belongs to the MQO family. FAD is required as a cofactor.

It catalyses the reaction (S)-malate + a quinone = a quinol + oxaloacetate. Its pathway is carbohydrate metabolism; tricarboxylic acid cycle; oxaloacetate from (S)-malate (quinone route): step 1/1. This Bradyrhizobium diazoefficiens (strain JCM 10833 / BCRC 13528 / IAM 13628 / NBRC 14792 / USDA 110) protein is Probable malate:quinone oxidoreductase.